The following is a 463-amino-acid chain: Tryptophan aminotransferase-related protein 4 (463 aa).

A helical membrane pass occupies residues 6-26; that stretch reads LLLIVSIILNLVFTIHILYYS. Pyridoxal 5'-phosphate-binding positions include tyrosine 124, 163-164, asparagine 239, 259-262, 282-285, and arginine 293; these read TT, DYAY, and SLSK. N6-(pyridoxal phosphate)lysine is present on lysine 285.

It belongs to the alliinase family. It depends on pyridoxal 5'-phosphate as a cofactor.

Its subcellular location is the membrane. Functionally, probable aminotransferase. The polypeptide is Tryptophan aminotransferase-related protein 4 (TAR4) (Arabidopsis thaliana (Mouse-ear cress)).